Here is a 369-residue protein sequence, read N- to C-terminus: MARKISNKKTQRDLLAREKLFELAEKIYNQFENEVVPSISLPSRTKSNLEYSNESDVWVYGGRESERSAKTVKGAFQLLKTTYATEFLINEHLAQSRGSTLRELYYISEGWEAAKFKEQAESDRLIEDLELLTNLQREYFHMRPEEDGATMFGPIEITEQTNRGERNIHCQKDVGEGGYQIPFNVENIEFKAHDASMIIAIETGGMYARLMENGFDEAYNAILVHLKGQPARSTRRIIKRMNEELGIPVAVFTDGDPWSYRIYASVAYGAIKSAHLSEFMATPAAKFLGLQPSDIVEYELSTDKLTEQDINALRSELSDPRFESDYWKEQIQLQLDIGKKAEQQAFAGKGLNFVTEVYLPNRLKEMGML.

Residues 11-149 enclose the Topo IIA-type catalytic domain; the sequence is QRDLLAREKL…FHMRPEEDGA (139 aa). The active-site O-(5'-phospho-DNA)-tyrosine intermediate is the Tyr-106. Mg(2+) contacts are provided by Glu-202 and Asp-254.

It belongs to the TOP6A family. Homodimer. Heterotetramer of two Top6A and two Top6B chains. Mg(2+) is required as a cofactor.

The enzyme catalyses ATP-dependent breakage, passage and rejoining of double-stranded DNA.. In terms of biological role, relaxes both positive and negative superturns and exhibits a strong decatenase activity. This chain is Type 2 DNA topoisomerase 6 subunit A, found in Methanosarcina barkeri (strain Fusaro / DSM 804).